The following is a 141-amino-acid chain: Putative pre-16S rRNA nuclease (141 aa).

This sequence belongs to the YqgF nuclease family.

The protein localises to the cytoplasm. Its function is as follows. Could be a nuclease involved in processing of the 5'-end of pre-16S rRNA. This Cupriavidus necator (strain ATCC 17699 / DSM 428 / KCTC 22496 / NCIMB 10442 / H16 / Stanier 337) (Ralstonia eutropha) protein is Putative pre-16S rRNA nuclease.